A 145-amino-acid chain; its full sequence is D-aminoacyl-tRNA deacylase (145 aa).

The Gly-cisPro motif, important for rejection of L-amino acids signature appears at 137–138 (GP).

Belongs to the DTD family. Homodimer.

It localises to the cytoplasm. The catalysed reaction is glycyl-tRNA(Ala) + H2O = tRNA(Ala) + glycine + H(+). It carries out the reaction a D-aminoacyl-tRNA + H2O = a tRNA + a D-alpha-amino acid + H(+). Its function is as follows. An aminoacyl-tRNA editing enzyme that deacylates mischarged D-aminoacyl-tRNAs. Also deacylates mischarged glycyl-tRNA(Ala), protecting cells against glycine mischarging by AlaRS. Acts via tRNA-based rather than protein-based catalysis; rejects L-amino acids rather than detecting D-amino acids in the active site. By recycling D-aminoacyl-tRNA to D-amino acids and free tRNA molecules, this enzyme counteracts the toxicity associated with the formation of D-aminoacyl-tRNA entities in vivo and helps enforce protein L-homochirality. This is D-aminoacyl-tRNA deacylase from Pectobacterium carotovorum subsp. carotovorum (strain PC1).